The chain runs to 308 residues: Aspartate carbamoyltransferase catalytic subunit (308 aa).

Carbamoyl phosphate contacts are provided by arginine 55 and threonine 56. Residue lysine 83 participates in L-aspartate binding. The carbamoyl phosphate site is built by arginine 105, histidine 133, and glutamine 136. The L-aspartate site is built by arginine 166 and arginine 220. Carbamoyl phosphate is bound by residues glycine 261 and proline 262.

Belongs to the aspartate/ornithine carbamoyltransferase superfamily. ATCase family. In terms of assembly, heterododecamer (2C3:3R2) of six catalytic PyrB chains organized as two trimers (C3), and six regulatory PyrI chains organized as three dimers (R2).

It carries out the reaction carbamoyl phosphate + L-aspartate = N-carbamoyl-L-aspartate + phosphate + H(+). The protein operates within pyrimidine metabolism; UMP biosynthesis via de novo pathway; (S)-dihydroorotate from bicarbonate: step 2/3. Functionally, catalyzes the condensation of carbamoyl phosphate and aspartate to form carbamoyl aspartate and inorganic phosphate, the committed step in the de novo pyrimidine nucleotide biosynthesis pathway. The chain is Aspartate carbamoyltransferase catalytic subunit from Chlorobium limicola (strain DSM 245 / NBRC 103803 / 6330).